The sequence spans 929 residues: von Willebrand factor C and EGF domain-containing protein (929 aa).

An N-terminal signal peptide occupies residues Met-1 to Ala-21. Positions Leu-70 to Pro-98 constitute an EGF-like 1 domain. The region spanning Asp-142 to Gln-180 is the EGF-like 2; calcium-binding domain. Disulfide bonds link Cys-146–Cys-155, Cys-151–Cys-164, Cys-166–Cys-179, Cys-185–Cys-194, Cys-190–Cys-203, Cys-205–Cys-218, Cys-224–Cys-237, Cys-233–Cys-246, and Cys-248–Cys-261. The 39-residue stretch at Asp-181–Ile-219 folds into the EGF-like 3; calcium-binding domain. Positions Asp-220–Glu-262 constitute an EGF-like 4; calcium-binding domain. Disordered stretches follow at residues Ala-291–Ser-317 and Pro-339–Gly-374. Positions Pro-339–Leu-353 are enriched in low complexity. VWFC domains follow at residues Ser-376–Thr-433, Thr-433–Tyr-494, Gly-491–Arg-552, Thr-558–Ser-618, Ala-619–His-677, and His-677–Ser-762. N-linked (GlcNAc...) asparagine glycans are attached at residues Asn-454 and Asn-464. A disordered region spans residues Pro-731 to Arg-774. The span at Glu-743 to Thr-755 shows a compositional bias: basic and acidic residues. Asn-787 carries an N-linked (GlcNAc...) asparagine glycan. The segment covering Ile-791–Pro-807 has biased composition (polar residues). Disordered stretches follow at residues Ile-791–Phe-861 and Ala-879–Ile-929. Residues Leu-889 to Ser-903 show a composition bias toward low complexity.

It localises to the secreted. Its function is as follows. May be a regulatory element in the beta-catenin signaling pathway and a target for chemoprevention of hapatocellular carcinoma. The polypeptide is von Willebrand factor C and EGF domain-containing protein (Vwce) (Mus musculus (Mouse)).